A 364-amino-acid chain; its full sequence is UDP-N-acetylglucosamine--N-acetylmuramyl-(pentapeptide) pyrophosphoryl-undecaprenol N-acetylglucosamine transferase (364 aa).

UDP-N-acetyl-alpha-D-glucosamine contacts are provided by residues 10 to 12 (TAG), asparagine 124, arginine 161, serine 195, and glutamine 291.

Belongs to the glycosyltransferase 28 family. MurG subfamily.

The protein localises to the cell membrane. It carries out the reaction di-trans,octa-cis-undecaprenyl diphospho-N-acetyl-alpha-D-muramoyl-L-alanyl-D-glutamyl-meso-2,6-diaminopimeloyl-D-alanyl-D-alanine + UDP-N-acetyl-alpha-D-glucosamine = di-trans,octa-cis-undecaprenyl diphospho-[N-acetyl-alpha-D-glucosaminyl-(1-&gt;4)]-N-acetyl-alpha-D-muramoyl-L-alanyl-D-glutamyl-meso-2,6-diaminopimeloyl-D-alanyl-D-alanine + UDP + H(+). It participates in cell wall biogenesis; peptidoglycan biosynthesis. Functionally, cell wall formation. Catalyzes the transfer of a GlcNAc subunit on undecaprenyl-pyrophosphoryl-MurNAc-pentapeptide (lipid intermediate I) to form undecaprenyl-pyrophosphoryl-MurNAc-(pentapeptide)GlcNAc (lipid intermediate II). The sequence is that of UDP-N-acetylglucosamine--N-acetylmuramyl-(pentapeptide) pyrophosphoryl-undecaprenol N-acetylglucosamine transferase from Streptomyces coelicolor (strain ATCC BAA-471 / A3(2) / M145).